The sequence spans 372 residues: Lipoyl synthase (372 aa).

Cys-37, Cys-42, Cys-48, Cys-63, Cys-67, Cys-70, and Ser-292 together coordinate [4Fe-4S] cluster. The Radical SAM core domain maps to 49–281; that stretch reads WREGTATVML…ERAALEMGFL (233 aa). The tract at residues 338 to 372 is disordered; sequence LTAELDPDEPRPPVAPAPASASPARLVPAASLIRR. Residues 354-372 are compositionally biased toward low complexity; that stretch reads APASASPARLVPAASLIRR.

Belongs to the radical SAM superfamily. Lipoyl synthase family. The cofactor is [4Fe-4S] cluster.

The protein resides in the cytoplasm. It carries out the reaction [[Fe-S] cluster scaffold protein carrying a second [4Fe-4S](2+) cluster] + N(6)-octanoyl-L-lysyl-[protein] + 2 oxidized [2Fe-2S]-[ferredoxin] + 2 S-adenosyl-L-methionine + 4 H(+) = [[Fe-S] cluster scaffold protein] + N(6)-[(R)-dihydrolipoyl]-L-lysyl-[protein] + 4 Fe(3+) + 2 hydrogen sulfide + 2 5'-deoxyadenosine + 2 L-methionine + 2 reduced [2Fe-2S]-[ferredoxin]. The protein operates within protein modification; protein lipoylation via endogenous pathway; protein N(6)-(lipoyl)lysine from octanoyl-[acyl-carrier-protein]: step 2/2. Catalyzes the radical-mediated insertion of two sulfur atoms into the C-6 and C-8 positions of the octanoyl moiety bound to the lipoyl domains of lipoate-dependent enzymes, thereby converting the octanoylated domains into lipoylated derivatives. In Sorangium cellulosum (strain So ce56) (Polyangium cellulosum (strain So ce56)), this protein is Lipoyl synthase.